Consider the following 260-residue polypeptide: Factor V activator RVV-V gamma (260 aa).

The N-terminal stretch at 1–18 (MVLIKVLANLLVLQLSYA) is a signal peptide. The propeptide occupies 19 to 24 (QKSSEL). The Peptidase S1 domain maps to 25–251 (VVGGDECNIN…YNNWIQSIIA (227 aa)). 6 cysteine pairs are disulfide-bonded: cysteine 31/cysteine 165, cysteine 52/cysteine 68, cysteine 100/cysteine 258, cysteine 144/cysteine 212, cysteine 176/cysteine 191, and cysteine 202/cysteine 227. Catalysis depends on charge relay system residues histidine 67 and aspartate 112. Residue serine 206 is the Charge relay system of the active site. An N-linked (GlcNAc...) asparagine glycan is attached at asparagine 253.

This sequence belongs to the peptidase S1 family. Snake venom subfamily. Monomer. In terms of tissue distribution, expressed by the venom gland.

The protein localises to the secreted. The enzyme catalyses Fully activates human clotting factor V by a single cleavage at the 1545-Trp-Tyr-Leu-Arg-|-Ser-Asn-Asn-Gly-1552 bond. Cattle, but not rabbit, factor V is cleaved, and no other proteins of the clotting system are attacked. Esterase activity is observed on Bz-Arg-OEt and Tos-Arg-OMe, and amidase activity on Phe-pipecolyl-Arg-NHPhNO2.. Its function is as follows. Venom serine protease that selectively activates factor V (F5) in a calcium-independent manner. It cleaves the Arg(1545)-Ser(1546) linkage in the human factor V molecule. Induces the coagulation of mammalian plasma. This is Factor V activator RVV-V gamma from Daboia siamensis (Eastern Russel's viper).